The following is a 115-amino-acid chain: Large ribosomal subunit protein bL20 (115 aa).

The protein belongs to the bacterial ribosomal protein bL20 family.

Binds directly to 23S ribosomal RNA and is necessary for the in vitro assembly process of the 50S ribosomal subunit. It is not involved in the protein synthesizing functions of that subunit. This Prochlorococcus marinus (strain SARG / CCMP1375 / SS120) protein is Large ribosomal subunit protein bL20.